Reading from the N-terminus, the 415-residue chain is Adipocyte plasma membrane-associated protein (415 aa).

Residues 1–30 form a disordered region; the sequence is MNEAEGLRQRRPLRPQVITEDSPAQEAKEG. At 1–39 the chain is on the cytoplasmic side; that stretch reads MNEAEGLRQRRPLRPQVITEDSPAQEAKEGSAYSSKVFR. A helical transmembrane segment spans residues 40 to 60; sequence VTFLTLAASLAVPLLGATVLL. Residues 61 to 412 are Extracellular-facing; sequence DCPIDPQPIS…RSPFICRLNL (352 aa). Asn159 carries N-linked (GlcNAc...) asparagine glycosylation.

It belongs to the strictosidine synthase family.

It is found in the membrane. The polypeptide is Adipocyte plasma membrane-associated protein (APMAP) (Gallus gallus (Chicken)).